An 84-amino-acid polypeptide reads, in one-letter code: Acyl carrier protein (84 aa).

Residues 6 to 81 enclose the Carrier domain; it reads EEILTGLAEI…DAVDYIANAT (76 aa). Serine 41 carries the O-(pantetheine 4'-phosphoryl)serine modification.

It belongs to the acyl carrier protein (ACP) family. In terms of processing, 4'-phosphopantetheine is transferred from CoA to a specific serine of apo-ACP by AcpS. This modification is essential for activity because fatty acids are bound in thioester linkage to the sulfhydryl of the prosthetic group.

The protein localises to the cytoplasm. It participates in lipid metabolism; fatty acid biosynthesis. Carrier of the growing fatty acid chain in fatty acid biosynthesis. The protein is Acyl carrier protein of Acidothermus cellulolyticus (strain ATCC 43068 / DSM 8971 / 11B).